The chain runs to 679 residues: Membrane-spanning 4-domains subfamily A member 14 (679 aa).

A run of 4 helical transmembrane segments spans residues 50–70 (ILLA…YIGF), 76–96 (LVVL…TGYL), 110–130 (VTGM…FTIL), and 141–161 (MPSF…LFFL). Disordered regions lie at residues 218–259 (VSQP…EKKP), 331–363 (SEQT…ILSQ), 469–491 (KEWK…LNQQ), and 505–633 (VQAK…QAQV). Basic and acidic residues predominate over residues 224–234 (KGREFVPDEQK). Low complexity predominate over residues 337 to 348 (SKSTSSHVKQSS). The segment covering 469–478 (KEWKSEEELH) has biased composition (basic and acidic residues). 2 stretches are compositionally biased toward polar residues: residues 519–535 (DQQS…SLDQ) and 550–563 (KQAQ…QLPD). Residues 580-601 (QSKDGQVKDQQTDKEQNSKKQT) show a composition bias toward basic and acidic residues. Residues 619 to 632 (GQFQNVQAEGQQAQ) are compositionally biased toward polar residues.

This sequence belongs to the MS4A family.

The protein localises to the membrane. In terms of biological role, may be involved in signal transduction as a component of a multimeric receptor complex. This Homo sapiens (Human) protein is Membrane-spanning 4-domains subfamily A member 14 (MS4A14).